Consider the following 254-residue polypeptide: Glutamate racemase (254 aa).

Substrate-binding positions include 10–11 (DS) and 42–43 (YG). The Proton donor/acceptor role is filled by cysteine 73. A substrate-binding site is contributed by 74–75 (NT). Cysteine 183 acts as the Proton donor/acceptor in catalysis. Position 184-185 (184-185 (TH)) interacts with substrate.

This sequence belongs to the aspartate/glutamate racemases family.

The enzyme catalyses L-glutamate = D-glutamate. It functions in the pathway cell wall biogenesis; peptidoglycan biosynthesis. Functionally, provides the (R)-glutamate required for cell wall biosynthesis. In Herpetosiphon aurantiacus (strain ATCC 23779 / DSM 785 / 114-95), this protein is Glutamate racemase.